A 93-amino-acid chain; its full sequence is Pyrimidine/purine nucleoside phosphorylase (93 aa).

The protein belongs to the nucleoside phosphorylase PpnP family.

It catalyses the reaction a purine D-ribonucleoside + phosphate = a purine nucleobase + alpha-D-ribose 1-phosphate. It carries out the reaction adenosine + phosphate = alpha-D-ribose 1-phosphate + adenine. The enzyme catalyses cytidine + phosphate = cytosine + alpha-D-ribose 1-phosphate. The catalysed reaction is guanosine + phosphate = alpha-D-ribose 1-phosphate + guanine. It catalyses the reaction inosine + phosphate = alpha-D-ribose 1-phosphate + hypoxanthine. It carries out the reaction thymidine + phosphate = 2-deoxy-alpha-D-ribose 1-phosphate + thymine. The enzyme catalyses uridine + phosphate = alpha-D-ribose 1-phosphate + uracil. The catalysed reaction is xanthosine + phosphate = alpha-D-ribose 1-phosphate + xanthine. Functionally, catalyzes the phosphorolysis of diverse nucleosides, yielding D-ribose 1-phosphate and the respective free bases. Can use uridine, adenosine, guanosine, cytidine, thymidine, inosine and xanthosine as substrates. Also catalyzes the reverse reactions. The sequence is that of Pyrimidine/purine nucleoside phosphorylase from Cellvibrio japonicus (strain Ueda107) (Pseudomonas fluorescens subsp. cellulosa).